A 484-amino-acid polypeptide reads, in one-letter code: Trigger factor (484 aa).

One can recognise a PPIase FKBP-type domain in the interval 165–244 (GDFVQIDLTA…VQSVKERELP (80 aa)). Residues 429-484 (DAVSEEPADADAEAVVADAPAEEAAEAPAAEEAPAEKPKKKAPAKKKASEKAADSE) form a disordered region. Residues 430–440 (AVSEEPADADA) show a composition bias toward acidic residues. Basic and acidic residues predominate over residues 475–484 (KASEKAADSE).

Belongs to the FKBP-type PPIase family. Tig subfamily.

It localises to the cytoplasm. It carries out the reaction [protein]-peptidylproline (omega=180) = [protein]-peptidylproline (omega=0). Its function is as follows. Involved in protein export. Acts as a chaperone by maintaining the newly synthesized protein in an open conformation. Functions as a peptidyl-prolyl cis-trans isomerase. This is Trigger factor from Clavibacter michiganensis subsp. michiganensis (strain NCPPB 382).